Reading from the N-terminus, the 243-residue chain is Putative C-type lectin protein A7 (243 aa).

The helical transmembrane segment at 23–43 threads the bilayer; it reads IFFILAATNLMIAAFALGCLA. The region spanning 116 to 223 is the C-type lectin domain; the sequence is GQKACYYVPP…CTTSKLCLCG (108 aa). 2 disulfides stabilise this stretch: C137–C222 and C198–C214.

Its subcellular location is the host membrane. This is Putative C-type lectin protein A7 (A7) from Alcelaphine herpesvirus 1 (strain C500) (AlHV-1).